A 273-amino-acid polypeptide reads, in one-letter code: Undecaprenyl-diphosphatase (273 aa).

The next 7 membrane-spanning stretches (helical) occupy residues 54–74 (LGSILAVVVMFWRQLFGLIGI), 90–110 (LTLIHILLGMIPAVVLGLVFH), 116–136 (LFNPINVMYALVVGGLLLIAA), 156–178 (QAFMIGCFQCLALWPGFSRSGAT), 190–210 (YAASEFSFLLAVPMMMGATVL), 222–242 (ADIPMFAVGFVTAFVVALIAI), and 252–272 (ISFIPFAIYRFVVAAAVYVVF).

This sequence belongs to the UppP family.

It localises to the cell inner membrane. It catalyses the reaction di-trans,octa-cis-undecaprenyl diphosphate + H2O = di-trans,octa-cis-undecaprenyl phosphate + phosphate + H(+). Its function is as follows. Catalyzes the dephosphorylation of undecaprenyl diphosphate (UPP). Confers resistance to bacitracin. The polypeptide is Undecaprenyl-diphosphatase (Salmonella paratyphi A (strain ATCC 9150 / SARB42)).